Here is a 2564-residue protein sequence, read N- to C-terminus: Histone-lysine N-methyltransferase SETD2 (2564 aa).

The segment covering 1 to 11 (MKQLQPQPPPK) has biased composition (pro residues). A disordered region spans residues 1-30 (MKQLQPQPPPKMGDFYDPEHPTPEEEENEA). Residues 17–30 (DPEHPTPEEEENEA) are compositionally biased toward basic and acidic residues. At Ser131 the chain carries Phosphoserine. Disordered regions lie at residues 180-211 (STTVDSPPSSPPPPPPPAQATTLSSPAPVTEP), 272-561 (NEQA…TLSK), and 607-626 (PEREKAGSPAPSNRLNDSPT). The span at 187–197 (PSSPPPPPPPA) shows a compositional bias: pro residues. Positions 198–207 (QATTLSSPAP) are enriched in low complexity. Residues 278–290 (SSKKEDSHIGKDE) are compositionally biased toward basic and acidic residues. 3 positions are modified to phosphoserine: Ser321, Ser323, and Ser344. Composition is skewed to basic and acidic residues over residues 335 to 400 (RSHD…ERER), 421 to 432 (RSERSHYYDSDR), 439 to 467 (PYRERTRYSRPYTDNRARESSDSEEEYKK), and 479 to 528 (SYRD…EAIK). Residue Lys359 forms a Glycyl lysine isopeptide (Lys-Gly) (interchain with G-Cter in SUMO2) linkage. At Ser422 the chain carries Phosphoserine. Residues Ser532, Ser614, and Ser624 each carry the phosphoserine modification. Polar residues predominate over residues 616–625 (APSNRLNDSP). A Phosphothreonine modification is found at Thr626. Residue Lys637 forms a Glycyl lysine isopeptide (Lys-Gly) (interchain with G-Cter in SUMO2) linkage. A phosphoserine mark is found at Ser698, Ser708, Ser744, and Ser754. Lys776 is covalently cross-linked (Glycyl lysine isopeptide (Lys-Gly) (interchain with G-Cter in SUMO2)). Disordered stretches follow at residues 964–995 (EEGNSILPERRGRPEISLDERGEGGHVHTSDD), 1036–1101 (EDYS…SDHW), 1133–1233 (LHKG…LGKT), 1264–1352 (QEKP…FSDQ), and 1393–1443 (LEKN…PGSA). Residues 971–994 (PERRGRPEISLDERGEGGHVHTSD) show a composition bias toward basic and acidic residues. Positions 1045-1058 (SNDESDSEDTDSDD) are enriched in acidic residues. Over residues 1084–1095 (SPCSSRSSQSYR) the composition is skewed to low complexity. Ser1098 carries the phosphoserine modification. The segment covering 1162 to 1171 (HPQSDGVDST) has biased composition (polar residues). Residues 1172–1191 (SHTDVKSDPLGHPNSEETVK) are compositionally biased toward basic and acidic residues. Residues 1215–1225 (KSWQQTTFQNR) are compositionally biased toward polar residues. Residue Ser1228 is modified to Phosphoserine. Residues 1265–1276 (EKPSTTYQQPDS) show a composition bias toward polar residues. Basic and acidic residues predominate over residues 1393–1403 (LEKNDIKDRGP). 3 positions are modified to phosphoserine: Ser1413, Ser1415, and Ser1417. The tract at residues 1418-1714 (DGELQDRKKV…KKERSRKKDS (297 aa)) is interaction with TUBA1A. A compositionally biased stretch (basic and acidic residues) spans 1421-1431 (LQDRKKVRVEV). Positions 1494–1548 (IKRMQCECTPLSKDERAQGEIACGEDCLNRLLMIECSSRCPNGDYCSNRRFQRKQ) constitute an AWS domain. Zn(2+) contacts are provided by Cys1499, Cys1501, Cys1516, Cys1520, Cys1529, Cys1533, and Cys1539. The SET domain occupies 1550 to 1667 (ADVEVILTEK…SGSELTFDYQ (118 aa)). Residues 1560–1562 (KGW), 1603–1605 (HYY), and 1628–1629 (NH) contribute to the S-adenosyl-L-methionine site. Cys1631 contacts Zn(2+). The 17-residue stretch at 1674–1690 (EAQKCFCGSANCRGYLG) folds into the Post-SET domain. Gln1676 is an S-adenosyl-L-methionine binding site. Cys1678 contacts Zn(2+). Position 1679 (Phe1679) interacts with S-adenosyl-L-methionine. Residues Cys1680 and Cys1685 each coordinate Zn(2+). Phosphoserine occurs at positions 1696, 1844, and 1845. Residues 1831–1872 (KTAVPPLSEGDGYSSENTSRAHTPLNTPDPSTKLSTEADTDT) form a disordered region. The segment covering 1844-1867 (SSENTSRAHTPLNTPDPSTKLSTE) has biased composition (polar residues). A phosphothreonine mark is found at Thr1853 and Thr1872. A Phosphoserine modification is found at Ser1888. Residues 1921–2142 (EELQSQQLLP…EAQKQQQQMQ (222 aa)) are disordered. Positions 1924–1935 (QSQQLLPQQLPE) are enriched in low complexity. At Ser1952 the chain carries Phosphoserine. Residues 1960–1972 (IEPKESNGTKLEE) are compositionally biased toward basic and acidic residues. The segment covering 1973-1990 (PINEETPSQDEEEGVSDV) has biased composition (acidic residues). Phosphoserine occurs at positions 1980, 1988, and 1995. 3 stretches are compositionally biased toward basic and acidic residues: residues 1991-2004 (ESERSQEQPDKTVD), 2014-2046 (DSWKDLKEVYRIPKKSQTEKENTTTERGRDAVG), and 2059-2072 (RSRERDPDKQTQNK). A phosphoserine mark is found at Ser2080 and Ser2082. Basic and acidic residues-rich tracts occupy residues 2090–2100 (RGTKRPDDRYD) and 2111–2135 (KDRNKLSTEERRKLFEQEVAQREAQ). Residues 2117–2146 (STEERRKLFEQEVAQREAQKQQQQMQNLGM) are a coiled coil. The segment at 2137-2366 (QQQQMQNLGM…APGQPQPLQP (230 aa)) is low charge region. Residues 2389–2422 (IVLPPNWKTARDPEGKIYYYHVITRQTQWDPPTW) enclose the WW domain. A disordered region spans residues 2439 to 2465 (LGTPTYDENPMKASKKPKTAEADTSSE). Residues 2457–2564 (TAEADTSSEL…YKPKEDTELE (108 aa)) form an interaction with POLR2A region.

The protein belongs to the class V-like SAM-binding methyltransferase superfamily. Histone-lysine methyltransferase family. SET2 subfamily. In terms of assembly, specifically interacts with hyperphosphorylated C-terminal domain (CTD) of RNA polymerase II large subunit (POLR2A): binds to CTD heptad repeats doubly phosphorylated on 'Ser-2' and 'Ser-5' of each heptad. Interacts with HTT. Interacts with IWS1. Interacts with p53/TP53; leading to regulate p53/TP53 target genes. Component of a complex with HNRNPL. Interacts with TUBA1A; the interaction is independent on alpha-tubulin acetylation on 'Lys-40'. Interacts with STAT1. May be automethylated. As to expression, ubiquitously expressed.

Its subcellular location is the nucleus. It localises to the chromosome. It catalyses the reaction L-lysyl(36)-[histone H3] + 3 S-adenosyl-L-methionine = N(6),N(6),N(6)-trimethyl-L-lysyl(36)-[histone H3] + 3 S-adenosyl-L-homocysteine + 3 H(+). The catalysed reaction is L-lysyl-[protein] + S-adenosyl-L-methionine = N(6)-methyl-L-lysyl-[protein] + S-adenosyl-L-homocysteine + H(+). It carries out the reaction L-lysyl-[protein] + 3 S-adenosyl-L-methionine = N(6),N(6),N(6)-trimethyl-L-lysyl-[protein] + 3 S-adenosyl-L-homocysteine + 3 H(+). With respect to regulation, specifically inhibited by sinefungin derivatives. N-propyl sinefungin (Pr-SNF) interacts preferentially with SETD2. In terms of biological role, histone methyltransferase that specifically trimethylates 'Lys-36' of histone H3 (H3K36me3) using dimethylated 'Lys-36' (H3K36me2) as substrate. It is capable of trimethylating unmethylated H3K36 (H3K36me0) in vitro. Represents the main enzyme generating H3K36me3, a specific tag for epigenetic transcriptional activation. Plays a role in chromatin structure modulation during elongation by coordinating recruitment of the FACT complex and by interacting with hyperphosphorylated POLR2A. Acts as a key regulator of DNA mismatch repair in G1 and early S phase by generating H3K36me3, a mark required to recruit MSH6 subunit of the MutS alpha complex: early recruitment of the MutS alpha complex to chromatin to be replicated allows a quick identification of mismatch DNA to initiate the mismatch repair reaction. Required for DNA double-strand break repair in response to DNA damage: acts by mediating formation of H3K36me3, promoting recruitment of RAD51 and DNA repair via homologous recombination (HR). Acts as a tumor suppressor. H3K36me3 also plays an essential role in the maintenance of a heterochromatic state, by recruiting DNA methyltransferase DNMT3A. H3K36me3 is also enhanced in intron-containing genes, suggesting that SETD2 recruitment is enhanced by splicing and that splicing is coupled to recruitment of elongating RNA polymerase. Required during angiogenesis. Required for endoderm development by promoting embryonic stem cell differentiation toward endoderm: acts by mediating formation of H3K36me3 in distal promoter regions of FGFR3, leading to regulate transcription initiation of FGFR3. In addition to histones, also mediates methylation of other proteins, such as tubulins and STAT1. Trimethylates 'Lys-40' of alpha-tubulins such as TUBA1B (alpha-TubK40me3); alpha-TubK40me3 is required for normal mitosis and cytokinesis and may be a specific tag in cytoskeletal remodeling. Involved in interferon-alpha-induced antiviral defense by mediating both monomethylation of STAT1 at 'Lys-525' and catalyzing H3K36me3 on promoters of some interferon-stimulated genes (ISGs) to activate gene transcription. Functionally, (Microbial infection) Recruited to the promoters of adenovirus 12 E1A gene in case of infection, possibly leading to regulate its expression. The polypeptide is Histone-lysine N-methyltransferase SETD2 (SETD2) (Homo sapiens (Human)).